The sequence spans 734 residues: Terpene cyclase/mutase ntnI (734 aa).

Residues 1-12 (MQSHIGQWTSTA) are compositionally biased toward polar residues. Positions 1–26 (MQSHIGQWTSTAKGHLSRDENGDEKT) are disordered. A compositionally biased stretch (basic and acidic residues) spans 16-26 (LSRDENGDEKT). PFTB repeat units lie at residues 130 to 172 (AIEI…RLLG), 493 to 534 (LHNA…SGKT), 570 to 610 (RTRG…ALAG), and 619 to 668 (SRKG…GLMH).

This sequence belongs to the terpene cyclase/mutase family.

It participates in secondary metabolite biosynthesis; terpenoid biosynthesis. Terpene cyclase/mutase; part of the gene cluster that mediates the biosynthesis of the meroterpenoids nectripenoids A and B, as well as cochliquninone D and isocochliquninone E. The pathway probably begins with the HR-PKS ntnH that catalyzes two chain-extension steps to form a reduced triketide, which then primes the SAT domain in the NR-PKS ntnG to initiate three more cycles of extension to give a linear hexaketide corresponding to the polyketide part of nectripenoids. The FAD-dependent monooxygenase ntnJ then performs an oxidative decarboxylation at C11 of the ntnH/ntnG product, via an electrophilic aromatic hydroxylation with concomitant ipso-decarboxylation. The membrane-bound polyprenyl transferase ntnF then introduces a farnesyl group before the FAD-dependent monooxygenase ntnK functions as the first epoxidase on terminal C12'-C13' olefin, followed by a second epoxidation on C7'-C8' catalyzed by ntnA. The terpene cyclase/mutase ntnI then initiates the sequential tricyclic ring formation through protonation of the terminal epoxide and catalyzes the regioselective and stereoselective 6/6/6-tricyclic ring formation. The cytochrome P450 monooxygenase ntnM may then hydroxylate C1'. In Nectria sp, this protein is Terpene cyclase/mutase ntnI.